Reading from the N-terminus, the 594-residue chain is Neuronal PAS domain-containing protein 1 (594 aa).

The bHLH domain maps to 45-98; it reads QRKEKSRNAARWRRGKENLEFFELAKLLPLPGAISSQLDKASIVRLSVTYLRLR. Residues 135 to 205 form the PAS 1 domain; the sequence is EQHLGGHILQ…EQLGLRAASI (71 aa). A disordered region spans residues 206–237; that stretch reads GPPTPPSVSSSSSSSSSSLVDTPEIEASPTEA. Low complexity predominate over residues 212–223; the sequence is SVSSSSSSSSSS. One can recognise a PAS 2 domain in the interval 294–360; that stretch reads APLAELPLHG…IRQSHLDLLD (67 aa). One can recognise a PAC domain in the interval 366-409; the sequence is TGYYRWLQRAGGFVWLQSVATVAGNGKSTGEHHVLWVSHVLSNA. The tract at residues 427 to 498 is disordered; the sequence is QEEPSRPGPE…DPPAPPRPEF (72 aa). Residues 453–480 are compositionally biased toward basic and acidic residues; it reads DQDKDKDPQARGKRIKVEASPKEARGSE.

In terms of assembly, efficient DNA binding requires dimerization with another bHLH protein. Interacts with ARNT; forms a heterodimer that binds core DNA sequence 5'-[AG]CGTG-3' within the hypoxia response element (HRE) leading to a transcriptional repressor on its target gene TH. Expressed in brain in inhibitory interneurons. Also found in spinal cord.

Its subcellular location is the nucleus. In terms of biological role, may control regulatory pathways relevant to schizophrenia and to psychotic illness. May play a role in late central nervous system development by modulating EPO expression in response to cellular oxygen level. Forms a heterodimer that binds core DNA sequence 5'-TACGTG-3' within the hypoxia response element (HRE) leading to transcriptional repression on its target gene TH. This chain is Neuronal PAS domain-containing protein 1 (Npas1), found in Mus musculus (Mouse).